A 168-amino-acid polypeptide reads, in one-letter code: DAZ-associated protein 2 (168 aa).

Positions 1 to 13 (MNSKGQYPTQPTY) are enriched in low complexity. The tract at residues 1–25 (MNSKGQYPTQPTYPVQPPGNPVYPQ) is disordered. Positions 39–42 (PPAY) match the PPAY motif. S77 is subject to Phosphoserine.

As to quaternary structure, interacts with SOX6. Interacts with DAZ1 and DAZL. Interacts with IL17RB. May interact with FAM168B. Interacts with INCA1. Interacts with EIF4G1 and EIF4G2. Interacts (via PPAY motif) with NEDD4 (via WW domains). Interacts with transcription factor TCF4; the interaction results in localization of DAZAP2 to the nucleus. Interacts with transcription factors TCF7 and TCF7L1. Interacts with transcription factor LEF1. Interacts with serine/threonine-protein kinase HIPK2; the interaction results in phosphorylation of DAZAP2 which causes localization of DAZAP2 to the nucleus, reduces interaction of DAZAP2 with HIPK2 and prevents DAZAP2-dependent degradation of HIPK2. Interacts with ubiquitin ligase SIAH1; the interaction is decreased following phosphorylation of DAZAP2 by HIPK2. Interacts with TP53; the interaction is triggered by DNA damage. Ubiquitinated by SMURF2, leading to proteasomal degradation. Ubiquitinated by NEDD4, leading to proteasomal degradation. Post-translationally, following DNA damage, phosphorylated by HIPK2 which promotes DAZAP2 localization to the nucleus, reduces interaction of DAZAP2 with HIPK2 and SIAH1, and prevents DAZAP2-dependent ubiquitination of HIPK2 by E3 ubiquitin-protein ligase SIAH1 and subsequent HIPK2 proteasomal degradation.

The protein resides in the cytoplasm. It localises to the nucleus. Its subcellular location is the nucleus speckle. It is found in the nuclear body. The protein localises to the stress granule. In terms of biological role, in unstressed cells, promotes SIAH1-mediated polyubiquitination and degradation of the serine/threonine-protein kinase HIPK2, probably by acting as a loading factor that potentiates complex formation between HIPK2 and ubiquitin ligase SIAH1. In response to DNA damage, localizes to the nucleus following phosphorylation by HIPK2 and modulates the expression of a subset of TP53/p53 target genes by binding to TP53 at target gene promoters. This limits the expression of a number of cell death-mediating TP53 target genes, reducing DNA damage-induced cell death. Enhances the binding of transcription factor TCF7L2/TCF4, a Wnt signaling pathway effector, to the promoters of target genes. Plays a role in stress granule formation. The chain is DAZ-associated protein 2 from Bos taurus (Bovine).